A 233-amino-acid chain; its full sequence is 5'-methylthioadenosine/S-adenosylhomocysteine nucleosidase (233 aa).

The active-site Proton acceptor is Glu-12. Substrate-binding positions include Gly-78, Ile-156, and Met-177–Glu-178. The active-site Proton donor is Asp-201.

It belongs to the PNP/UDP phosphorylase family. MtnN subfamily.

The catalysed reaction is S-adenosyl-L-homocysteine + H2O = S-(5-deoxy-D-ribos-5-yl)-L-homocysteine + adenine. It carries out the reaction S-methyl-5'-thioadenosine + H2O = 5-(methylsulfanyl)-D-ribose + adenine. It catalyses the reaction 5'-deoxyadenosine + H2O = 5-deoxy-D-ribose + adenine. It participates in amino-acid biosynthesis; L-methionine biosynthesis via salvage pathway; S-methyl-5-thio-alpha-D-ribose 1-phosphate from S-methyl-5'-thioadenosine (hydrolase route): step 1/2. In terms of biological role, catalyzes the irreversible cleavage of the glycosidic bond in both 5'-methylthioadenosine (MTA) and S-adenosylhomocysteine (SAH/AdoHcy) to adenine and the corresponding thioribose, 5'-methylthioribose and S-ribosylhomocysteine, respectively. Also cleaves 5'-deoxyadenosine, a toxic by-product of radical S-adenosylmethionine (SAM) enzymes, into 5-deoxyribose and adenine. The polypeptide is 5'-methylthioadenosine/S-adenosylhomocysteine nucleosidase (Listeria welshimeri serovar 6b (strain ATCC 35897 / DSM 20650 / CCUG 15529 / CIP 8149 / NCTC 11857 / SLCC 5334 / V8)).